The sequence spans 129 residues: Small ribosomal subunit protein uS11 (129 aa).

It belongs to the universal ribosomal protein uS11 family. Part of the 30S ribosomal subunit. Interacts with proteins S7 and S18. Binds to IF-3.

Located on the platform of the 30S subunit, it bridges several disparate RNA helices of the 16S rRNA. Forms part of the Shine-Dalgarno cleft in the 70S ribosome. The chain is Small ribosomal subunit protein uS11 from Methylobacterium radiotolerans (strain ATCC 27329 / DSM 1819 / JCM 2831 / NBRC 15690 / NCIMB 10815 / 0-1).